Here is a 462-residue protein sequence, read N- to C-terminus: tRNA modification GTPase MnmE (462 aa).

Residues Arg-27, Glu-89, and Arg-128 each contribute to the (6S)-5-formyl-5,6,7,8-tetrahydrofolate site. The TrmE-type G domain occupies 223-383 (GLKIAIVGRP…LEAAILAAVG (161 aa)). K(+) is bound at residue Asn-233. GTP is bound by residues 233–238 (NVGKSS), 252–258 (TDLPGTT), and 277–280 (DTAG). Ser-237 is a Mg(2+) binding site. K(+)-binding residues include Thr-252, Leu-254, and Thr-257. Thr-258 lines the Mg(2+) pocket. (6S)-5-formyl-5,6,7,8-tetrahydrofolate is bound at residue Lys-462.

This sequence belongs to the TRAFAC class TrmE-Era-EngA-EngB-Septin-like GTPase superfamily. TrmE GTPase family. In terms of assembly, homodimer. Heterotetramer of two MnmE and two MnmG subunits. K(+) is required as a cofactor.

The protein localises to the cytoplasm. In terms of biological role, exhibits a very high intrinsic GTPase hydrolysis rate. Involved in the addition of a carboxymethylaminomethyl (cmnm) group at the wobble position (U34) of certain tRNAs, forming tRNA-cmnm(5)s(2)U34. This is tRNA modification GTPase MnmE from Synechococcus elongatus (strain ATCC 33912 / PCC 7942 / FACHB-805) (Anacystis nidulans R2).